Reading from the N-terminus, the 267-residue chain is uncharacterized protein (267 aa).

The protein to S.pombe SpAC18G6.12c.

This is an uncharacterized protein from Schizosaccharomyces pombe (strain 972 / ATCC 24843) (Fission yeast).